Here is a 234-residue protein sequence, read N- to C-terminus: Triosephosphate isomerase (234 aa).

Residue N8–K10 participates in substrate binding. H90 serves as the catalytic Electrophile. The active-site Proton acceptor is the E159. Substrate-binding residues include G165 and S197.

It belongs to the triosephosphate isomerase family. As to quaternary structure, homodimer.

The protein localises to the cytoplasm. The enzyme catalyses D-glyceraldehyde 3-phosphate = dihydroxyacetone phosphate. It functions in the pathway carbohydrate biosynthesis; gluconeogenesis. It participates in carbohydrate degradation; glycolysis; D-glyceraldehyde 3-phosphate from glycerone phosphate: step 1/1. Involved in the gluconeogenesis. Catalyzes stereospecifically the conversion of dihydroxyacetone phosphate (DHAP) to D-glyceraldehyde-3-phosphate (G3P). In Helicobacter pylori (strain J99 / ATCC 700824) (Campylobacter pylori J99), this protein is Triosephosphate isomerase.